We begin with the raw amino-acid sequence, 2266 residues long: Little elongation complex subunit 1 (2266 aa).

Residues 23 to 186 (CASLQQNLNE…KQKNEKELRH (164 aa)) are a coiled coil. Disordered regions lie at residues 223–259 (GEGSRCVPEKPAKAITSSRVPGEDGTLPPTQGSPLRT) and 517–540 (PAQEKEAAPGKSELCSSPLGKRPL). The segment covering 250–259 (PPTQGSPLRT) has biased composition (polar residues). Phosphoserine occurs at positions 255, 533, 558, and 589. A disordered region spans residues 591–623 (ELEKEKEDTQGFTLGESPESEDDDSGDGMDVAG). Residues 608-617 (PESEDDDSGD) show a composition bias toward acidic residues. Ser707 carries the phosphoserine modification. Thr832 carries the post-translational modification Phosphothreonine. Ser925 bears the Phosphoserine mark. The tract at residues 925–955 (SPEVSASRRKLDFNSPGGSSPVENSDCSTNS) is disordered. Residues 940–955 (PGGSSPVENSDCSTNS) show a composition bias toward polar residues. Position 958 is a phosphoserine (Ser958). Disordered regions lie at residues 977–1001 (VQGDGQKQRQPQATDLDSSGTHGSE) and 1107–1133 (TEVESEAFSCSEGSEQQDAPDDSQKNL). The span at 984 to 998 (QRQPQATDLDSSGTH) shows a compositional bias: polar residues. Lys1218 bears the N6-acetyllysine mark. 3 disordered regions span residues 1295–1372 (TTEN…PSAL), 1467–1510 (AEKS…KSRL), and 1543–1707 (NSKL…SASE). Composition is skewed to polar residues over residues 1306–1319 (RETTGSSSHASEPT), 1328–1344 (EGSSPISGMPQNENPQS), 1487–1505 (NNLSCPQEDVSSSGQSTNF), 1565–1588 (NKPVKTSASSRVETHQSEVAQSFS), and 1594–1605 (TKTQRSQTQTIL). Ser1588 carries the post-translational modification Phosphoserine. Low complexity-rich tracts occupy residues 1609-1620 (DTSTPTDCSPDT) and 1637-1671 (APLIATPPRTSQPLSPLISSSSPSSPASPVGQVSP). The residue at position 1617 (Ser1617) is a Phosphoserine. Thr1642 carries the phosphothreonine modification. Phosphoserine is present on residues Ser1692, Ser1697, Ser1699, Ser1701, Ser1712, Ser1838, and Ser1854. Residues 1809–1902 (TGSSSGGDCN…AVSAVSQLPL (94 aa)) form a disordered region. Polar residues predominate over residues 1825–1843 (LGTQQDSSGKRTLSTSTLR). Over residues 1889-1901 (CSSPAVSAVSQLP) the composition is skewed to polar residues. A Phosphoserine modification is found at Ser1903.

The protein belongs to the ICE1 family. Component of the little elongation complex (LEC), at least composed of ELL (ELL, ELL2 or ELL3), ZC3H8, ICE1 and ICE2. Interacts (via N-terminus domain) with ELL. Interacts (via C-terminus domain) with ICE2 and ZC3H8.

It is found in the nucleus. The protein localises to the cajal body. Its function is as follows. Component of the little elongation complex (LEC), a complex required to regulate small nuclear RNA (snRNA) gene transcription by RNA polymerase II and III. Specifically acts as a scaffold protein that promotes the LEC complex formation and recruitment and RNA polymerase II occupancy at snRNA genes in subnuclear bodies. This chain is Little elongation complex subunit 1 (ICE1), found in Homo sapiens (Human).